The primary structure comprises 428 residues: Protein clpf-1 (428 aa).

Residues Glu16, Arg56, and Asp124 to Thr129 contribute to the ATP site.

Belongs to the Clp1 family. Clp1 subfamily.

Its subcellular location is the nucleus. Functionally, required for endonucleolytic cleavage during polyadenylation-dependent pre-mRNA 3'-end formation. In Caenorhabditis elegans, this protein is Protein clpf-1.